Consider the following 149-residue polypeptide: Protein K7 (149 aa).

This sequence belongs to the orthopoxvirus OPG044 family. As to quaternary structure, interacts with DDX3; this interaction inhibits DDX3 and suppresses DDX3-mediated IFN-beta promoter induction. Interacts with TRAF6 and IRAK2; these interactions suppress TLR-dependent NF-KappaB activation.

Its subcellular location is the host cytoplasm. In terms of biological role, virulence factor that affects the acute immune response to infection. Bcl-2-like protein which, through its interaction with the DEAD box RNA helicase DDX3X/DDX3, prevents TBK1/IKKepsilon-mediated IRF3 activation. Contributes to virulence by binding to the host TRAF6 and IRAK2 and preventing host NF-kappa-B activation. The protein is Protein K7 (OPG044) of Homo sapiens (Human).